The following is a 231-amino-acid chain: Probable septum site-determining protein MinC (231 aa).

The interval Glu-100–Thr-125 is disordered.

Belongs to the MinC family. As to quaternary structure, interacts with MinD and FtsZ.

Its function is as follows. Cell division inhibitor that blocks the formation of polar Z ring septums. Rapidly oscillates between the poles of the cell to destabilize FtsZ filaments that have formed before they mature into polar Z rings. Prevents FtsZ polymerization. This chain is Probable septum site-determining protein MinC, found in Escherichia coli O81 (strain ED1a).